A 372-amino-acid polypeptide reads, in one-letter code: Glutamate 5-kinase (372 aa).

Residue Lys14 participates in ATP binding. 3 residues coordinate substrate: Ser54, Asp141, and Asn153. Residues 173–174 and 215–221 each bind ATP; these read TD and TGGMATK. The PUA domain occupies 280-358; that stretch reads RGQLVIDAGA…DSIEEVLGYD (79 aa).

This sequence belongs to the glutamate 5-kinase family.

The protein localises to the cytoplasm. The enzyme catalyses L-glutamate + ATP = L-glutamyl 5-phosphate + ADP. Its pathway is amino-acid biosynthesis; L-proline biosynthesis; L-glutamate 5-semialdehyde from L-glutamate: step 1/2. Its function is as follows. Catalyzes the transfer of a phosphate group to glutamate to form L-glutamate 5-phosphate. In Shewanella pealeana (strain ATCC 700345 / ANG-SQ1), this protein is Glutamate 5-kinase.